A 185-amino-acid chain; its full sequence is Ribose 1,5-bisphosphate phosphokinase PhnN (185 aa).

10 to 17 (GPSGSGKD) contacts ATP.

Belongs to the ribose 1,5-bisphosphokinase family.

It catalyses the reaction alpha-D-ribose 1,5-bisphosphate + ATP = 5-phospho-alpha-D-ribose 1-diphosphate + ADP. It functions in the pathway metabolic intermediate biosynthesis; 5-phospho-alpha-D-ribose 1-diphosphate biosynthesis; 5-phospho-alpha-D-ribose 1-diphosphate from D-ribose 5-phosphate (route II): step 3/3. In terms of biological role, catalyzes the phosphorylation of ribose 1,5-bisphosphate to 5-phospho-D-ribosyl alpha-1-diphosphate (PRPP). This is Ribose 1,5-bisphosphate phosphokinase PhnN from Pseudomonas paraeruginosa (strain DSM 24068 / PA7) (Pseudomonas aeruginosa (strain PA7)).